The chain runs to 362 residues: Putative RING-H2 finger protein ATL21B (362 aa).

The signal sequence occupies residues 1–23 (MIISKQLFLLFFLLFFIFPLRHA). Residues 234 to 254 (VVAVLICLSIIGAVILFVTCI) traverse the membrane as a helical segment. The segment at 316-358 (CPICLSEYVSKETVRFIPECDHCFHAKCIDVWLKIHGSCPLCR) adopts an RING-type; atypical zinc-finger fold.

Belongs to the RING-type zinc finger family. ATL subfamily.

The protein resides in the membrane. The enzyme catalyses S-ubiquitinyl-[E2 ubiquitin-conjugating enzyme]-L-cysteine + [acceptor protein]-L-lysine = [E2 ubiquitin-conjugating enzyme]-L-cysteine + N(6)-ubiquitinyl-[acceptor protein]-L-lysine.. Its pathway is protein modification; protein ubiquitination. The polypeptide is Putative RING-H2 finger protein ATL21B (ATL21B) (Arabidopsis thaliana (Mouse-ear cress)).